The chain runs to 122 residues: Small ribosomal subunit protein uS12 (122 aa).

At D89 the chain carries 3-methylthioaspartic acid.

It belongs to the universal ribosomal protein uS12 family. As to quaternary structure, part of the 30S ribosomal subunit. Contacts proteins S8 and S17. May interact with IF1 in the 30S initiation complex.

Functionally, with S4 and S5 plays an important role in translational accuracy. In terms of biological role, interacts with and stabilizes bases of the 16S rRNA that are involved in tRNA selection in the A site and with the mRNA backbone. Located at the interface of the 30S and 50S subunits, it traverses the body of the 30S subunit contacting proteins on the other side and probably holding the rRNA structure together. The combined cluster of proteins S8, S12 and S17 appears to hold together the shoulder and platform of the 30S subunit. This is Small ribosomal subunit protein uS12 from Corynebacterium glutamicum (strain R).